The chain runs to 178 residues: Large ribosomal subunit protein uL6 (178 aa).

The protein belongs to the universal ribosomal protein uL6 family. In terms of assembly, part of the 50S ribosomal subunit.

In terms of biological role, this protein binds to the 23S rRNA, and is important in its secondary structure. It is located near the subunit interface in the base of the L7/L12 stalk, and near the tRNA binding site of the peptidyltransferase center. The sequence is that of Large ribosomal subunit protein uL6 from Shouchella clausii (strain KSM-K16) (Alkalihalobacillus clausii).